A 253-amino-acid chain; its full sequence is 5-oxoprolinase subunit A (253 aa).

The protein belongs to the LamB/PxpA family. As to quaternary structure, forms a complex composed of PxpA, PxpB and PxpC.

The catalysed reaction is 5-oxo-L-proline + ATP + 2 H2O = L-glutamate + ADP + phosphate + H(+). Its function is as follows. Catalyzes the cleavage of 5-oxoproline to form L-glutamate coupled to the hydrolysis of ATP to ADP and inorganic phosphate. The chain is 5-oxoprolinase subunit A from Chloroflexus aurantiacus (strain ATCC 29364 / DSM 637 / Y-400-fl).